We begin with the raw amino-acid sequence, 317 residues long: Transaldolase (317 aa).

The active-site Schiff-base intermediate with substrate is K132.

This sequence belongs to the transaldolase family. Type 1 subfamily. Homodimer.

It localises to the cytoplasm. The enzyme catalyses D-sedoheptulose 7-phosphate + D-glyceraldehyde 3-phosphate = D-erythrose 4-phosphate + beta-D-fructose 6-phosphate. The protein operates within carbohydrate degradation; pentose phosphate pathway; D-glyceraldehyde 3-phosphate and beta-D-fructose 6-phosphate from D-ribose 5-phosphate and D-xylulose 5-phosphate (non-oxidative stage): step 2/3. Its function is as follows. Transaldolase is important for the balance of metabolites in the pentose-phosphate pathway. This is Transaldolase (talB) from Escherichia coli O104:H4 (strain 2009EL-2071).